The chain runs to 502 residues: Glycerol kinase (502 aa).

Position 14 (T14) interacts with ADP. T14, T15, and S16 together coordinate ATP. T14 is a sn-glycerol 3-phosphate binding site. Position 18 (R18) interacts with ADP. 4 residues coordinate sn-glycerol 3-phosphate: R84, E85, Y136, and D246. The glycerol site is built by R84, E85, Y136, D246, and Q247. 2 residues coordinate ADP: T268 and G311. The ATP site is built by T268, G311, Q315, and G412. G412 and N416 together coordinate ADP.

It belongs to the FGGY kinase family. Homotetramer and homodimer (in equilibrium). Heterodimer with EIIA-Glc. Binds 1 zinc ion per glycerol kinase EIIA-Glc dimer. The zinc ion is important for dimerization.

The catalysed reaction is glycerol + ATP = sn-glycerol 3-phosphate + ADP + H(+). Its pathway is polyol metabolism; glycerol degradation via glycerol kinase pathway; sn-glycerol 3-phosphate from glycerol: step 1/1. Activity of this regulatory enzyme is affected by several metabolites. Allosterically and non-competitively inhibited by fructose 1,6-bisphosphate (FBP) and unphosphorylated phosphocarrier protein EIIA-Glc (III-Glc), an integral component of the bacterial phosphotransferase (PTS) system. In terms of biological role, key enzyme in the regulation of glycerol uptake and metabolism. Catalyzes the phosphorylation of glycerol to yield sn-glycerol 3-phosphate. The sequence is that of Glycerol kinase from Escherichia coli O127:H6 (strain E2348/69 / EPEC).